The sequence spans 308 residues: uncharacterized protein (308 aa).

A run of 7 helical transmembrane segments spans residues 10-30 (IILLSSIGITIASIIVETNLI), 91-111 (LPTILGESVFRVQLPLAVVIL), 115-135 (LGLIYVSLNVISGFLQALIGI), 178-198 (VIPMIVIFTLLINFLIKLGLM), 219-239 (ITVLIANLAHFSAGYTTVDIL), 251-271 (LIVLLIGNIISVTMIYLKHSI), and 288-308 (INYTISVMIKILLILLLIAFF).

This sequence to M.jannaschii MJ0871, MJ1556 and MJ1589.

It is found in the cell membrane. This is an uncharacterized protein from Methanocaldococcus jannaschii (strain ATCC 43067 / DSM 2661 / JAL-1 / JCM 10045 / NBRC 100440) (Methanococcus jannaschii).